We begin with the raw amino-acid sequence, 352 residues long: Trifunctional sesterterpene/triterpene/sesquarterpene synthase (352 aa).

The protein belongs to the large terpene synthase family.

It catalyses the reaction (2E,6E,10E,14E)-geranylfarnesyl diphosphate = beta-geranylfarnesene + diphosphate. The catalysed reaction is all-trans-hexaprenyl diphosphate = beta-hexaprene + diphosphate. The enzyme catalyses all-trans-heptaprenyl diphosphate = beta-heptaprene + diphosphate. In terms of biological role, catalyzes the conversion of geranylfarnesyl diphosphate (GFPP) and hexaprenyl diphosphate (HexPP) into beta-geranylfarnesene and beta-hexaprene, respectively. Also produces beta-heptaprene from heptaprenyl diphosphate (HepPP) as a minor product. The polypeptide is Trifunctional sesterterpene/triterpene/sesquarterpene synthase (Shouchella clausii (Alkalihalobacillus clausii)).